A 249-amino-acid chain; its full sequence is Small ribosomal subunit protein uS3y (249 aa).

One can recognise a KH type-2 domain in the interval 21–92 (LNEVLTRELA…SVELYAEKVN (72 aa)). S212 carries the post-translational modification Phosphoserine.

The protein belongs to the universal ribosomal protein uS3 family.

In Arabidopsis thaliana (Mouse-ear cress), this protein is Small ribosomal subunit protein uS3y (RPS3B).